A 122-amino-acid chain; its full sequence is Small ribosomal subunit protein bS6 (122 aa).

The protein belongs to the bacterial ribosomal protein bS6 family.

Its function is as follows. Binds together with bS18 to 16S ribosomal RNA. The polypeptide is Small ribosomal subunit protein bS6 (Neisseria gonorrhoeae (strain ATCC 700825 / FA 1090)).